We begin with the raw amino-acid sequence, 504 residues long: Putative ribose/galactose/methyl galactoside import ATP-binding protein (504 aa).

ABC transporter domains lie at 5–242 (ISVK…GRNL) and 252–497 (TSAN…TRRE). 37–44 (GENGAGKS) lines the ATP pocket.

This sequence belongs to the ABC transporter superfamily. Carbohydrate importer 2 (CUT2) (TC 3.A.1.2) family.

The protein resides in the cell inner membrane. It carries out the reaction D-ribose(out) + ATP + H2O = D-ribose(in) + ADP + phosphate + H(+). The enzyme catalyses D-galactose(out) + ATP + H2O = D-galactose(in) + ADP + phosphate + H(+). Part of an ABC transporter complex involved in carbohydrate import. Could be involved in ribose, galactose and/or methyl galactoside import. Responsible for energy coupling to the transport system. This Albidiferax ferrireducens (strain ATCC BAA-621 / DSM 15236 / T118) (Rhodoferax ferrireducens) protein is Putative ribose/galactose/methyl galactoside import ATP-binding protein.